The primary structure comprises 437 residues: Na(+)/H(+) antiporter NhaA (437 aa).

Helical transmembrane passes span 29–49 (TAGI…NTAW), 74–94 (LKHW…ALEL), 111–131 (LPVA…LLLV), 139–159 (GWGT…ALLG), 168–188 (LFLL…VAVG), 196–216 (VALG…LLGI), 229–249 (IWLA…ILGL), 307–327 (IALH…SNAG), 341–361 (IAIV…FSFL), 376–396 (WSLL…ALFI), and 411–431 (LGVL…LTLL).

This sequence belongs to the NhaA Na(+)/H(+) (TC 2.A.33) antiporter family.

The protein resides in the cell inner membrane. It carries out the reaction Na(+)(in) + 2 H(+)(out) = Na(+)(out) + 2 H(+)(in). Na(+)/H(+) antiporter that extrudes sodium in exchange for external protons. The polypeptide is Na(+)/H(+) antiporter NhaA (Rhizobium meliloti (strain 1021) (Ensifer meliloti)).